The following is a 350-amino-acid chain: WD repeat-containing protein DWA2 (350 aa).

WD repeat units follow at residues 39-79 (KEEN…FDQR), 118-158 (AHVG…KSAE), 166-205 (GMRHSLSGGAWNPHDVNSVAATSESSIQFWDLRTMKKNNS), 206-246 (IERA…FPVQ), 250-290 (GHTH…EHKT), and 311-350 (DYEDSVYGLAWSSREPWIFASLSYDGRVVIESVKPFLPRR).

As to quaternary structure, interacts with ABI5 and DDB1A and DWA1.

Its subcellular location is the nucleus. It participates in protein modification; protein ubiquitination. Component of the CUL4-RBX1-DDB1-DWA1/DWA2 E3 ubiquitin-protein ligase complex that acts as a negative regulator in abscisic acid (ABA) signaling. May function as the substrate recognition module within this complex leading to ABI5 degradation. Functionally redundant with DWA1. In Arabidopsis thaliana (Mouse-ear cress), this protein is WD repeat-containing protein DWA2 (DWA2).